Here is a 517-residue protein sequence, read N- to C-terminus: Urethanase (517 aa).

Residues K98 and S173 each act as charge relay system in the active site. The active-site Acyl-ester intermediate is S197.

It belongs to the amidase family. Homooctamer.

It carries out the reaction urethane + H2O + H(+) = ethanol + NH4(+) + CO2. Exhibits poor salt tolerance but excellent tolerance to low concentrations of ethanol. EDTA has almost no impact on activity. Activity is increased in the presence of Ca(2+), Mg(2+) and Co(3+) and inhibited in the presence of Al(3+), Zn(2+) and Cu(2+). Its function is as follows. Hydrolase that can catalyze the degradation of ethyl carbamate (also called urethane), a probable human carcinogen widely found in alcoholic beverages. Can also use methyl carbamate, butyl carbamate, acetamide and urea. Also catalyzes the enantioselective hydrolysis of 2-phenylpropionamide, alpha-chlorophenylacetamide, 2-methyl-3-phenylpropionamide and alpha-methoxyphenylacetamide to the corresponding acids. Is inactive on benzamide and L-glutamine. This Rhizobium radiobacter (Agrobacterium tumefaciens) protein is Urethanase.